An 845-amino-acid chain; its full sequence is Protein P (845 aa).

The segment at 1–179 (MPLSYQHFRK…FCGSPYSWEQ (179 aa)) is terminal protein domain (TP). Positions 180-348 (ELQHGRLVIK…YCLSHLVNLR (169 aa)) are spacer. The disordered stretch occupies residues 226–246 (GLQPHQGPLASSQPGRSGSIR). The segment at 349 to 692 (EDRGPCDEHG…YMNLYPVARQ (344 aa)) is polymerase/reverse transcriptase domain (RT). The region spanning 359-602 (EHHIRIPRTP…YSLNFMGYVI (244 aa)) is the Reverse transcriptase domain. Mg(2+) is bound by residues aspartate 431, aspartate 553, and aspartate 554.

It belongs to the hepadnaviridae P protein family.

The catalysed reaction is DNA(n) + a 2'-deoxyribonucleoside 5'-triphosphate = DNA(n+1) + diphosphate. The enzyme catalyses Endonucleolytic cleavage to 5'-phosphomonoester.. Its activity is regulated as follows. Activated by host HSP70 and HSP40 in vitro to be able to bind the epsilon loop of the pgRNA. Because deletion of the RNase H region renders the protein partly chaperone-independent, the chaperones may be needed indirectly to relieve occlusion of the RNA-binding site by this domain. Inhibited by several reverse-transcriptase inhibitors: Lamivudine, Adefovir and Entecavir. In terms of biological role, multifunctional enzyme that converts the viral RNA genome into dsDNA in viral cytoplasmic capsids. This enzyme displays a DNA polymerase activity that can copy either DNA or RNA templates, and a ribonuclease H (RNase H) activity that cleaves the RNA strand of RNA-DNA heteroduplexes in a partially processive 3'- to 5'-endonucleasic mode. Neo-synthesized pregenomic RNA (pgRNA) are encapsidated together with the P protein, and reverse-transcribed inside the nucleocapsid. Initiation of reverse-transcription occurs first by binding the epsilon loop on the pgRNA genome, and is initiated by protein priming, thereby the 5'-end of (-)DNA is covalently linked to P protein. Partial (+)DNA is synthesized from the (-)DNA template and generates the relaxed circular DNA (RC-DNA) genome. After budding and infection, the RC-DNA migrates in the nucleus, and is converted into a plasmid-like covalently closed circular DNA (cccDNA). The activity of P protein does not seem to be necessary for cccDNA generation, and is presumably released from (+)DNA by host nuclear DNA repair machinery. This is Protein P from Hepatitis B virus genotype A2 subtype adw2 (isolate Germany/991/1990) (HBV-A).